The following is a 448-amino-acid chain: SVP1-like protein 2 (448 aa).

Asn61, Asn155, Asn256, Asn280, Asn315, and Asn421 each carry an N-linked (GlcNAc...) asparagine glycan. WD repeat units follow at residues Ala222 to Glu262 and Val267 to Thr306. Positions Thr416–Pro435 are disordered. Positions Leu424–Pro435 are enriched in basic and acidic residues.

The protein belongs to the WD repeat PROPPIN family. In terms of processing, N-glycosylated.

Its subcellular location is the endosome membrane. It is found in the prevacuolar compartment membrane. In terms of biological role, involved in piecemeal microautophagy of the nucleus (micronucleophagy). This is SVP1-like protein 2 (HSV2) from Saccharomyces cerevisiae (strain ATCC 204508 / S288c) (Baker's yeast).